The sequence spans 475 residues: Serralysin G (475 aa).

Positions 1–14 are excised as a propeptide; it reads MALYGKKTDLSSAS. Residue His-186 coordinates Zn(2+). Glu-187 is an active-site residue. Residues His-190 and Tyr-226 each coordinate Zn(2+). Arg-261, Gly-263, Thr-265, Asp-293, Gly-295, Gly-296, Asp-298, Glu-337, Gly-342, Gly-344, Asp-346, Asn-351, Asn-355, Gly-359, Gly-360, Ala-361, Gly-362, Asp-364, Gly-368, Gly-370, Gly-371, Asp-373, Gly-377, Gly-378, Ala-379, Gly-380, Asp-382, Asp-391, Asp-398, and Asp-408 together coordinate Ca(2+). 2 Hemolysin-type calcium-binding repeats span residues 340–357 and 358–375; these read IGGS…DNRI and DGGA…ADIL.

Belongs to the peptidase M10B family. The cofactor is Ca(2+). Zn(2+) is required as a cofactor.

The protein resides in the secreted. The catalysed reaction is Preferential cleavage of bonds with hydrophobic residues in P1'.. The protein is Serralysin G (prtG) of Dickeya chrysanthemi (Pectobacterium chrysanthemi).